Here is a 446-residue protein sequence, read N- to C-terminus: MTTPPGPPNAGGDARTGTDTVIVVGGEDWEQVVAAAEQAQAGERIVVNMGPQHPSTHGVLRLILEIEGETITEARCGIGYLHTGIEKNLEYRNWTQGVTFVTRMDYLSPFFNETAYCLGVEKLLGVTDAIPERVNVIRVMLMELNRISSHLVALATGGMELGAMSAMFYGFREREEILSVFEMITGLRMNHAYIRPGGLAADLPDGAVPRIRELLALLPGRLRDLENLLNENYIWKARTQGIGYLDLAGCMALGITGPVLRSTGLPHDLRRAQPYCGYEDYEFDVITDDGCDAYGRYLIRVKEMRESLKIVEQCVDRLKPGPVMIADKKLAWPADLELGPDGLGNSPAHIARIMGQSMEGLIHHFKLVTEGIRVPAGQVYTAVESPRGELGVHMVSDGGTRPYRVHYRDPSFTNLQAVAAMCEGGMVADAISAVASIDPVMGGVDR.

It belongs to the complex I 49 kDa subunit family. As to quaternary structure, NDH-1 is composed of 14 different subunits. Subunits NuoB, C, D, E, F, and G constitute the peripheral sector of the complex.

It localises to the cell membrane. The enzyme catalyses a quinone + NADH + 5 H(+)(in) = a quinol + NAD(+) + 4 H(+)(out). NDH-1 shuttles electrons from NADH, via FMN and iron-sulfur (Fe-S) centers, to quinones in the respiratory chain. The immediate electron acceptor for the enzyme in this species is believed to be a menaquinone. Couples the redox reaction to proton translocation (for every two electrons transferred, four hydrogen ions are translocated across the cytoplasmic membrane), and thus conserves the redox energy in a proton gradient. The sequence is that of NADH-quinone oxidoreductase subunit D from Mycobacterium sp. (strain JLS).